The chain runs to 162 residues: D-aminoacyl-tRNA deacylase (162 aa).

The short motif at 145-146 (GP) is the Gly-cisPro motif, important for rejection of L-amino acids element.

It belongs to the DTD family. Homodimer.

It localises to the cytoplasm. The enzyme catalyses glycyl-tRNA(Ala) + H2O = tRNA(Ala) + glycine + H(+). The catalysed reaction is a D-aminoacyl-tRNA + H2O = a tRNA + a D-alpha-amino acid + H(+). In terms of biological role, an aminoacyl-tRNA editing enzyme that deacylates mischarged D-aminoacyl-tRNAs. Also deacylates mischarged glycyl-tRNA(Ala), protecting cells against glycine mischarging by AlaRS. Acts via tRNA-based rather than protein-based catalysis; rejects L-amino acids rather than detecting D-amino acids in the active site. By recycling D-aminoacyl-tRNA to D-amino acids and free tRNA molecules, this enzyme counteracts the toxicity associated with the formation of D-aminoacyl-tRNA entities in vivo and helps enforce protein L-homochirality. The chain is D-aminoacyl-tRNA deacylase from Bifidobacterium longum (strain DJO10A).